A 207-amino-acid polypeptide reads, in one-letter code: Claudin-11 (207 aa).

M1 is a topological domain (cytoplasmic). Residues 2 to 22 form a helical membrane-spanning segment; that stretch reads VATCLQVVGFVTSFVGWIGII. The Extracellular portion of the chain corresponds to 23 to 82; it reads VTTSTNDWVVTCSYTIPTCRKMDELGSKGLWADCVMATGLYHCKPLVDILILPGYVQACR. Residues 83 to 103 form a helical membrane-spanning segment; it reads ALMIAASVLGLPAILLLLTVL. Over 104–122 the chain is Cytoplasmic; the sequence is PCIRMGHEPGVAKYRRAQL. The helical transmembrane segment at 123–143 threads the bilayer; the sequence is AGVLLILLALCAIVATIWFPV. The Extracellular portion of the chain corresponds to 144–157; the sequence is CAHREITIVSFGYS. Residues 158–178 form a helical membrane-spanning segment; it reads LYAGWIGAVMCLVGGCVIVCC. Residues 179-207 are Cytoplasmic-facing; the sequence is SGDAQSFGENRFYYSSGSSSPTHAKSAHV. Residues S193, S194, S197, and S198 each carry the phosphoserine modification.

It belongs to the claudin family. In terms of assembly, interacts with tetraspanin-3/TSPAN3. Interacts with OCLN.

The protein resides in the cell junction. The protein localises to the tight junction. Its subcellular location is the cell membrane. Plays a major role in tight junction-specific obliteration of the intercellular space, through calcium-independent cell-adhesion activity. This is Claudin-11 (Cldn11) from Mus musculus (Mouse).